A 411-amino-acid polypeptide reads, in one-letter code: uncharacterized protein (411 aa).

It belongs to the peptidase M20 family.

This is an uncharacterized protein from Haemophilus influenzae (strain ATCC 51907 / DSM 11121 / KW20 / Rd).